The sequence spans 111 residues: Nucleoid-associated protein NMCC_1355 (111 aa).

Belongs to the YbaB/EbfC family. As to quaternary structure, homodimer.

It is found in the cytoplasm. The protein resides in the nucleoid. Functionally, binds to DNA and alters its conformation. May be involved in regulation of gene expression, nucleoid organization and DNA protection. This Neisseria meningitidis serogroup C (strain 053442) protein is Nucleoid-associated protein NMCC_1355.